A 311-amino-acid chain; its full sequence is MIDLLIIAGPTAVGKTDISIKLAEKLNGEIISADSMQIYKYMDIGSAKITKDEMKGIPHHLIDVVEPHEEFNVSSFKALAEESIKDIWNRGKLPIIAGGTGLYINSLIYNYDFTDADRDEKYREYLTKLAEDKGKEYVHSLLKDIDEESYEKLYPNDLKRVVRALEVYKITGKSISEYTKENEKKLYDIPYNVNYFILNMNREVLYERINKRVDIMMGKGLIEEVKKLESMGYTPDMQSMKGIGYKEVLFYLNGDISLDEAIYLIKKGSRNYAKRQLTWFRKDKRSIWIDKDKYNSEEEIVDKIIKMVKDK.

9–16 is an ATP binding site; the sequence is GPTAVGKT. 11–16 is a binding site for substrate; it reads TAVGKT. Residues 34–37 form an interaction with substrate tRNA region; sequence DSMQ.

Belongs to the IPP transferase family. Monomer. Mg(2+) serves as cofactor.

It carries out the reaction adenosine(37) in tRNA + dimethylallyl diphosphate = N(6)-dimethylallyladenosine(37) in tRNA + diphosphate. Its function is as follows. Catalyzes the transfer of a dimethylallyl group onto the adenine at position 37 in tRNAs that read codons beginning with uridine, leading to the formation of N6-(dimethylallyl)adenosine (i(6)A). The sequence is that of tRNA dimethylallyltransferase from Clostridium botulinum (strain Langeland / NCTC 10281 / Type F).